We begin with the raw amino-acid sequence, 327 residues long: Cyclic AMP-responsive element-binding protein 1 (327 aa).

Disordered regions lie at residues 1–26 (MTME…QQMT) and 94–113 (SEDS…RREI). A KID domain is found at 87-146 (QISTIAESEDSQESVDSVTDSQKRREILSRRPSYRKILNDLSSDAPGVPRIEEEKSEEET). Ser-119 is subject to Phosphoserine; by CaMK1, CaMK2, CaMK4, PKB/AKT1 or PKB/AKT2, RPS6KA3, RPS6KA4, RPS6KA5, SGK1 and TSSK4. A Glycyl lysine isopeptide (Lys-Gly) (interchain with G-Cter in SUMO2) cross-link involves residue Lys-122. A disordered region spans residues 125-148 (NDLSSDAPGVPRIEEEKSEEETSA). Ser-128 is subject to Phosphoserine. Position 257 is a phosphoserine; by HIPK2 (Ser-257). One can recognise a bZIP domain in the interval 269 to 327 (ARKREVRLMKNREAARECRRKKKEYVKCLENRVAVLENQNKTLIEELKALKDLYCHKSD). Positions 270–295 (RKREVRLMKNREAARECRRKKKEYVK) are basic motif. Residues Lys-271 and Lys-290 each participate in a glycyl lysine isopeptide (Lys-Gly) (interchain with G-Cter in SUMO1) cross-link. Positions 297 to 318 (LENRVAVLENQNKTLIEELKAL) are leucine-zipper.

Belongs to the bZIP family. As to quaternary structure, interacts with PPRC1. Binds DNA as a dimer. This dimer is stabilized by magnesium ions. Interacts, through the bZIP domain, with the coactivators CRTC1/TORC1, CRTC2/TORC2 and CRTC3/TORC3. When phosphorylated on Ser-119, binds CREBBP. Interacts with CREBL2; regulates CREB1 phosphorylation, stability and transcriptional activity. Interacts (phosphorylated form) with TOX3. Interacts with ARRB1. Binds to HIPK2. Interacts with SGK1. Interacts with TSSK4; this interaction facilitates phosphorylation on Ser-119. Forms a complex with KMT2A and CREBBP. Interacts with TOX4; CREB1 is required for full induction of TOX4-dependent activity and the interaction is increased by cAMP and inhibited by insulin. (Microbial infection) Interacts with hepatitis B virus/HBV protein X. In terms of assembly, (Microbial infection) Interacts with HTLV-1 protein Tax. Post-translationally, stimulated by phosphorylation. Phosphorylation of both Ser-119 and Ser-128 in the SCN regulates the activity of CREB and participates in circadian rhythm generation. Phosphorylation of Ser-119 allows CREBBP binding. In liver, phosphorylation is induced by fasting or glucagon in a circadian fashion. CREBL2 positively regulates phosphorylation at Ser-119 thereby stimulating CREB1 transcriptional activity. Phosphorylated upon calcium influx by CaMK4 and CaMK2 on Ser-119. CaMK4 is much more potent than CaMK2 in activating CREB. Phosphorylated by CaMK2 on Ser-128. Phosphorylation of Ser-128 blocks CREB-mediated transcription even when Ser-119 is phosphorylated. Phosphorylated by CaMK1. Phosphorylation of Ser-257 by HIPK2 in response to genotoxic stress promotes CREB1 activity, facilitating the recruitment of the coactivator CBP. Phosphorylated at Ser-119 by RPS6KA3, RPS6KA4 and RPS6KA5 in response to mitogenic or stress stimuli. Phosphorylated by TSSK4 on Ser-119. In terms of processing, sumoylated with SUMO1. Sumoylation on Lys-290, but not on Lys-271, is required for nuclear localization of this protein. Sumoylation is enhanced under hypoxia, promoting nuclear localization and stabilization.

It localises to the nucleus. Phosphorylation-dependent transcription factor that stimulates transcription upon binding to the DNA cAMP response element (CRE), a sequence present in many viral and cellular promoters. Transcription activation is enhanced by the TORC coactivators which act independently of Ser-119 phosphorylation. Involved in different cellular processes including the synchronization of circadian rhythmicity and the differentiation of adipose cells. Regulates the expression of apoptotic and inflammatory response factors in cardiomyocytes in response to ERFE-mediated activation of AKT signaling. This chain is Cyclic AMP-responsive element-binding protein 1 (CREB1), found in Homo sapiens (Human).